The following is a 540-amino-acid chain: Sterol 14-alpha demethylase (540 aa).

A helical transmembrane segment spans residues 41–61 (PLFLVSGFLGVCVAYAVANII). C485 contributes to the heme binding site.

Belongs to the cytochrome P450 family. The cofactor is heme.

The protein resides in the membrane. It catalyses the reaction a 14alpha-methyl steroid + 3 reduced [NADPH--hemoprotein reductase] + 3 O2 = a Delta(14) steroid + formate + 3 oxidized [NADPH--hemoprotein reductase] + 4 H2O + 4 H(+). The catalysed reaction is a 14alpha-methyl steroid + reduced [NADPH--hemoprotein reductase] + O2 = a 14alpha-hydroxymethyl steroid + oxidized [NADPH--hemoprotein reductase] + H2O + H(+). The enzyme catalyses a 14alpha-hydroxymethyl steroid + reduced [NADPH--hemoprotein reductase] + O2 = a 14alpha-formyl steroid + oxidized [NADPH--hemoprotein reductase] + 2 H2O + H(+). It carries out the reaction a 14alpha-formyl steroid + reduced [NADPH--hemoprotein reductase] + O2 = a Delta(14) steroid + formate + oxidized [NADPH--hemoprotein reductase] + H2O + 2 H(+). It catalyses the reaction lanosterol + 3 reduced [NADPH--hemoprotein reductase] + 3 O2 = 4,4-dimethyl-5alpha-cholesta-8,14,24-trien-3beta-ol + formate + 3 oxidized [NADPH--hemoprotein reductase] + 4 H2O + 4 H(+). The catalysed reaction is lanosterol + reduced [NADPH--hemoprotein reductase] + O2 = 32-hydroxylanosterol + oxidized [NADPH--hemoprotein reductase] + H2O + H(+). The enzyme catalyses 32-hydroxylanosterol + reduced [NADPH--hemoprotein reductase] + O2 = 32-oxolanosterol + oxidized [NADPH--hemoprotein reductase] + 2 H2O + H(+). It carries out the reaction 32-oxolanosterol + reduced [NADPH--hemoprotein reductase] + O2 = 4,4-dimethyl-5alpha-cholesta-8,14,24-trien-3beta-ol + formate + oxidized [NADPH--hemoprotein reductase] + H2O + 2 H(+). It catalyses the reaction eburicol + 3 reduced [NADPH--hemoprotein reductase] + 3 O2 = 14-demethyleburicol + formate + 3 oxidized [NADPH--hemoprotein reductase] + 4 H2O + 4 H(+). The catalysed reaction is eburicol + reduced [NADPH--hemoprotein reductase] + O2 = 32-hydroxyeburicol + oxidized [NADPH--hemoprotein reductase] + H2O + H(+). The enzyme catalyses 32-hydroxyeburicol + reduced [NADPH--hemoprotein reductase] + O2 = 32-oxoeburicol + oxidized [NADPH--hemoprotein reductase] + 2 H2O + H(+). It carries out the reaction 32-oxoeburicol + reduced [NADPH--hemoprotein reductase] + O2 = 14-demethyleburicol + formate + oxidized [NADPH--hemoprotein reductase] + H2O + 2 H(+). Its pathway is steroid biosynthesis; sterol biosynthesis. Sterol 14-alpha demethylase; part of the gene cluster that mediates the biosynthesis of tetrahydropyranyl antifungal agent lanomycin that acts as an inhibitor of CYP51 and blocks the ergosterol biosynthesis. Sterol 14-alpha-demethylase plays a critical role in the biosynthesis of ergosterol, the major sterol component in fungal membranes that participates in a variety of functions. Acts as a self-resistant CYP51 that contains mutations found in CYP51s isolated from azole resistance strains and that is not inhibited by the final product of the cluster, lanomycin. The sequence is that of Sterol 14-alpha demethylase from Pyrenophora dematioidea (Helminthosporium dematioideum).